The sequence spans 428 residues: 3-phosphoshikimate 1-carboxyvinyltransferase (428 aa).

3-phosphoshikimate-binding residues include lysine 22, serine 23, and arginine 27. Lysine 22 is a phosphoenolpyruvate binding site. Phosphoenolpyruvate is bound by residues glycine 96 and arginine 124. 7 residues coordinate 3-phosphoshikimate: serine 170, serine 171, glutamine 172, serine 198, aspartate 314, asparagine 337, and lysine 341. Glutamine 172 is a binding site for phosphoenolpyruvate. The active-site Proton acceptor is the aspartate 314. Arginine 345, arginine 387, and lysine 412 together coordinate phosphoenolpyruvate.

It belongs to the EPSP synthase family. Monomer.

The protein localises to the cytoplasm. It catalyses the reaction 3-phosphoshikimate + phosphoenolpyruvate = 5-O-(1-carboxyvinyl)-3-phosphoshikimate + phosphate. It participates in metabolic intermediate biosynthesis; chorismate biosynthesis; chorismate from D-erythrose 4-phosphate and phosphoenolpyruvate: step 6/7. Catalyzes the transfer of the enolpyruvyl moiety of phosphoenolpyruvate (PEP) to the 5-hydroxyl of shikimate-3-phosphate (S3P) to produce enolpyruvyl shikimate-3-phosphate and inorganic phosphate. In Vibrio vulnificus (strain YJ016), this protein is 3-phosphoshikimate 1-carboxyvinyltransferase.